Reading from the N-terminus, the 274-residue chain is Fatty-acid O-methyltransferase (274 aa).

This sequence belongs to the methyltransferase superfamily.

It carries out the reaction a fatty acid + S-adenosyl-L-methionine = a fatty acid methyl ester + S-adenosyl-L-homocysteine. Its function is as follows. O-methyltransferase that modifies the hydroxy group of the fatty acids. Oleate is the most effective fatty acid acceptor. This is Fatty-acid O-methyltransferase (mtf2) from Mycolicibacterium smegmatis (strain ATCC 700084 / mc(2)155) (Mycobacterium smegmatis).